The sequence spans 517 residues: FAD-dependent monooxygenase FUP4 (517 aa).

The first 19 residues, 1 to 19 (MRQSSTLTWTSVLLAPLAA), serve as a signal peptide directing secretion. In terms of domain architecture, FAD-binding PCMH-type spans 75-246 (QALRPACLVH…TRFDLDLYDQ (172 aa)). Pros-8alpha-FAD histidine is present on His112. Asn163, Asn208, and Asn346 each carry an N-linked (GlcNAc...) asparagine glycan.

This sequence belongs to the oxygen-dependent FAD-linked oxidoreductase family. FAD is required as a cofactor.

It functions in the pathway secondary metabolite biosynthesis; terpenoid biosynthesis. In terms of biological role, FAD-dependent monooxygenase; part of the gene cluster that mediates the biosynthesis of the mycotoxin fusaproliferin (FUP) that belongs to the class of bicyclic sesterterpenoids. FUP4 catalyzes the oxidation of the hydroxy group at the C-16 position of preterpestacin III to a keto group, leading to the formation of (-)-terpestacin. The product of FUP1, preterpestacin I, might also serve as a substrate of FUP4 to yield oxo-preterpestacin I. The FUP biosynthetic pathway starts with the enzyme encoded by FUP1 that combines a C-terminal prenyltransferase domain responsible for the synthesis of geranylgeranyl diphosphate with the N-terminal terpene cyclase domain, to yield preterpestacin I. Preterpestacin I is then decorated by oxygenation steps that are catalyzed by two cytochrome P450 monooxygenases. First, FUP2 introduces a hydroxyl group at the C-24 position resulting in the formation of preterpestacin IIa. The second P450 monooxygenase catalyzes the hydroxylation at C-16 and C-17 of preterpestacin IIa, producing preterpestacin III. Subsequently, the FAD-dependent oxidoreductase FUP4 catalyzes the oxidation of the hydroxy group at the C-16 position to a keto group, leading to the formation of (-)-terpestacin, which is the immediate precursor of FUP. The final step in the proposed biosynthetic pathway is the addition of an acetyl group at the C-24 position of terpestacin, which is catalyzed by the acetyltransferase FUP5. The chain is FAD-dependent monooxygenase FUP4 from Fusarium proliferatum (strain ET1) (Orchid endophyte fungus).